A 196-amino-acid chain; its full sequence is Large ribosomal subunit protein uL5 (196 aa).

The protein belongs to the universal ribosomal protein uL5 family. In terms of assembly, part of the 50S ribosomal subunit; part of the 5S rRNA/L5/L18/L25 subcomplex. Contacts the 5S rRNA and the P site tRNA. Forms a bridge to the 30S subunit in the 70S ribosome.

In terms of biological role, this is one of the proteins that bind and probably mediate the attachment of the 5S RNA into the large ribosomal subunit, where it forms part of the central protuberance. In the 70S ribosome it contacts protein S13 of the 30S subunit (bridge B1b), connecting the 2 subunits; this bridge is implicated in subunit movement. Contacts the P site tRNA; the 5S rRNA and some of its associated proteins might help stabilize positioning of ribosome-bound tRNAs. The protein is Large ribosomal subunit protein uL5 of Prosthecochloris aestuarii (strain DSM 271 / SK 413).